We begin with the raw amino-acid sequence, 211 residues long: Superoxide dismutase [Cu-Zn], chloroplastic (211 aa).

Residues 1 to 57 (MQAILAAAMAAQTLLFSATAPPASLFQSPSSARPFHSLRLAAGPAGAAAARALVVAD) constitute a chloroplast transit peptide. Cu cation-binding residues include His103, His105, and His120. A disulfide bond links Cys114 and Cys203. His120, His128, His137, and Asp140 together coordinate Zn(2+). Residue His177 participates in Cu cation binding.

The protein belongs to the Cu-Zn superoxide dismutase family. In terms of assembly, homotetramer. It depends on Cu cation as a cofactor. Zn(2+) serves as cofactor.

The protein resides in the plastid. Its subcellular location is the chloroplast. It carries out the reaction 2 superoxide + 2 H(+) = H2O2 + O2. Destroys radicals which are normally produced within the cells and which are toxic to biological systems. This chain is Superoxide dismutase [Cu-Zn], chloroplastic (SODCP), found in Oryza sativa subsp. japonica (Rice).